Here is a 122-residue protein sequence, read N- to C-terminus: Large ribosomal subunit protein uL18 (122 aa).

Belongs to the universal ribosomal protein uL18 family. In terms of assembly, part of the 50S ribosomal subunit; part of the 5S rRNA/L5/L18/L25 subcomplex. Contacts the 5S and 23S rRNAs.

Its function is as follows. This is one of the proteins that bind and probably mediate the attachment of the 5S RNA into the large ribosomal subunit, where it forms part of the central protuberance. The sequence is that of Large ribosomal subunit protein uL18 from Lachnospira eligens (strain ATCC 27750 / DSM 3376 / VPI C15-48 / C15-B4) (Eubacterium eligens).